The following is a 1377-amino-acid chain: DNA-directed RNA polymerase subunit beta (1377 aa).

Belongs to the RNA polymerase beta chain family. The RNAP catalytic core consists of 2 alpha, 1 beta, 1 beta' and 1 omega subunit. When a sigma factor is associated with the core the holoenzyme is formed, which can initiate transcription.

It carries out the reaction RNA(n) + a ribonucleoside 5'-triphosphate = RNA(n+1) + diphosphate. Functionally, DNA-dependent RNA polymerase catalyzes the transcription of DNA into RNA using the four ribonucleoside triphosphates as substrates. The polypeptide is DNA-directed RNA polymerase subunit beta (Campylobacter lari (strain RM2100 / D67 / ATCC BAA-1060)).